Reading from the N-terminus, the 286-residue chain is Bifunctional protein FolD (286 aa).

NADP(+) is bound by residues G166–S168 and I232.

It belongs to the tetrahydrofolate dehydrogenase/cyclohydrolase family. As to quaternary structure, homodimer.

The catalysed reaction is (6R)-5,10-methylene-5,6,7,8-tetrahydrofolate + NADP(+) = (6R)-5,10-methenyltetrahydrofolate + NADPH. It carries out the reaction (6R)-5,10-methenyltetrahydrofolate + H2O = (6R)-10-formyltetrahydrofolate + H(+). It functions in the pathway one-carbon metabolism; tetrahydrofolate interconversion. Functionally, catalyzes the oxidation of 5,10-methylenetetrahydrofolate to 5,10-methenyltetrahydrofolate and then the hydrolysis of 5,10-methenyltetrahydrofolate to 10-formyltetrahydrofolate. The chain is Bifunctional protein FolD from Shewanella denitrificans (strain OS217 / ATCC BAA-1090 / DSM 15013).